The primary structure comprises 812 residues: E3 UFM1-protein ligase 1 homolog (812 aa).

Residues 389–495 (IKHSAGQGKP…KTKEDNTNIF (107 aa)) form a disordered region. Basic and acidic residues-rich tracts occupy residues 403 to 415 (SEHR…KDLG) and 475 to 491 (DAKH…KEDN).

It belongs to the UFL1 family.

E3 UFM1-protein ligase that mediates ufmylation of target proteins. The chain is E3 UFM1-protein ligase 1 homolog from Oryza sativa subsp. indica (Rice).